We begin with the raw amino-acid sequence, 249 residues long: Photosystem I-associated linker protein CpcL (249 aa).

Residues 11 to 189 (VSQNQRVTNY…PRYGADHREK (179 aa)) form the PBS-linker domain. The chain crosses the membrane as a helical span at residues 223-247 (VVLYVGGALVSLGIIAVALSAWGII).

The protein belongs to the phycobilisome linker protein family. As to quaternary structure, part of a specialized phycobilisome (PBS), a structure that is usually composed of two distinct substructures: a core complex and a number of rods radiating from the core. This protein is part of a core-less PBS rod (called CpcL-PBS) with on average 5 stacked phycocyanin hexamers (PC, CpcA and CpcB). Linker CpcL connects the PC stack to the thylakoid, the hexamers are linked by 1 copy of CpcC1, 3 copies of CpcC2 and the stack is terminated by a single copy of CpcD. Ferredoxin--NADP reductase (petH) is also part of the complex. CpcL-PBS has no central core proteins (allophycocyanin ApcA, ApcB) nor phycobiliprotein ApcE.

It is found in the cellular thylakoid membrane. Its function is as follows. Rod linker protein, associated with phycocyanin. Linker polypeptides determine the state of aggregation and the location of the disk-shaped phycobiliprotein units within the phycobilisome and modulate their spectroscopic properties in order to mediate a directed and optimal energy transfer. Plays a role in energy transfer from the phycobilisome to photosystem I (PSI). Although able to transfer energy to both photosystems, this is predominantly a PSI antenna. This Synechocystis sp. (strain ATCC 27184 / PCC 6803 / Kazusa) protein is Photosystem I-associated linker protein CpcL.